We begin with the raw amino-acid sequence, 315 residues long: Homoserine kinase (315 aa).

96–106 (PHSRGLGSSAA) contacts ATP.

This sequence belongs to the GHMP kinase family. Homoserine kinase subfamily.

It localises to the cytoplasm. It carries out the reaction L-homoserine + ATP = O-phospho-L-homoserine + ADP + H(+). It participates in amino-acid biosynthesis; L-threonine biosynthesis; L-threonine from L-aspartate: step 4/5. In terms of biological role, catalyzes the ATP-dependent phosphorylation of L-homoserine to L-homoserine phosphate. The protein is Homoserine kinase of Mycobacterium leprae (strain Br4923).